Here is a 119-residue protein sequence, read N- to C-terminus: DNA-directed RNA polymerase subunit omega (119 aa).

Belongs to the RNA polymerase subunit omega family. In terms of assembly, the RNAP catalytic core consists of 2 alpha, 1 beta, 1 beta' and 1 omega subunit. When a sigma factor is associated with the core the holoenzyme is formed, which can initiate transcription.

The enzyme catalyses RNA(n) + a ribonucleoside 5'-triphosphate = RNA(n+1) + diphosphate. Promotes RNA polymerase assembly. Latches the N- and C-terminal regions of the beta' subunit thereby facilitating its interaction with the beta and alpha subunits. This chain is DNA-directed RNA polymerase subunit omega (rpoZ), found in Caulobacter vibrioides (strain ATCC 19089 / CIP 103742 / CB 15) (Caulobacter crescentus).